The following is a 70-amino-acid chain: Large ribosomal subunit protein uL30 (70 aa).

The protein belongs to the universal ribosomal protein uL30 family. As to quaternary structure, part of the 50S ribosomal subunit.

The polypeptide is Large ribosomal subunit protein uL30 (Renibacterium salmoninarum (strain ATCC 33209 / DSM 20767 / JCM 11484 / NBRC 15589 / NCIMB 2235)).